The chain runs to 358 residues: Histidinol-phosphate aminotransferase (358 aa).

At Lys218 the chain carries N6-(pyridoxal phosphate)lysine.

This sequence belongs to the class-II pyridoxal-phosphate-dependent aminotransferase family. Histidinol-phosphate aminotransferase subfamily. As to quaternary structure, homodimer. It depends on pyridoxal 5'-phosphate as a cofactor.

It carries out the reaction L-histidinol phosphate + 2-oxoglutarate = 3-(imidazol-4-yl)-2-oxopropyl phosphate + L-glutamate. The protein operates within amino-acid biosynthesis; L-histidine biosynthesis; L-histidine from 5-phospho-alpha-D-ribose 1-diphosphate: step 7/9. The sequence is that of Histidinol-phosphate aminotransferase from Dehalococcoides mccartyi (strain CBDB1).